We begin with the raw amino-acid sequence, 234 residues long: UPF0173 metal-dependent hydrolase RHE_CH01853 (234 aa).

It belongs to the UPF0173 family.

The protein is UPF0173 metal-dependent hydrolase RHE_CH01853 of Rhizobium etli (strain ATCC 51251 / DSM 11541 / JCM 21823 / NBRC 15573 / CFN 42).